An 828-amino-acid chain; its full sequence is Outer membrane usher protein PmfC (828 aa).

A signal peptide spans 1–28 (MLIPYSPHTIWKTICATLLLSLAFFSQA).

It belongs to the fimbrial export usher family.

It is found in the cell outer membrane. Involved in the export and assembly of PMF fimbrial subunits across the outer membrane. The protein is Outer membrane usher protein PmfC (pmfC) of Proteus mirabilis (strain HI4320).